Here is a 123-residue protein sequence, read N- to C-terminus: ATP synthase epsilon chain (123 aa).

This sequence belongs to the ATPase epsilon chain family. In terms of assembly, F-type ATPases have 2 components, CF(1) - the catalytic core - and CF(0) - the membrane proton channel. CF(1) has five subunits: alpha(3), beta(3), gamma(1), delta(1), epsilon(1). CF(0) has three main subunits: a, b and c.

The protein resides in the cell inner membrane. Functionally, produces ATP from ADP in the presence of a proton gradient across the membrane. The chain is ATP synthase epsilon chain from Helicobacter pylori (strain P12).